The chain runs to 343 residues: Putative kinase HI_0665 (343 aa).

Catalysis depends on Asp-209, which acts as the Proton acceptor.

The protein belongs to the HipA Ser/Thr kinase family.

In Haemophilus influenzae (strain ATCC 51907 / DSM 11121 / KW20 / Rd), this protein is Putative kinase HI_0665.